Reading from the N-terminus, the 428-residue chain is Glutamate-1-semialdehyde 2,1-aminomutase (428 aa).

Residue Lys-267 is modified to N6-(pyridoxal phosphate)lysine.

This sequence belongs to the class-III pyridoxal-phosphate-dependent aminotransferase family. HemL subfamily. Homodimer. The cofactor is pyridoxal 5'-phosphate.

The protein resides in the cytoplasm. The catalysed reaction is (S)-4-amino-5-oxopentanoate = 5-aminolevulinate. Its pathway is porphyrin-containing compound metabolism; protoporphyrin-IX biosynthesis; 5-aminolevulinate from L-glutamyl-tRNA(Glu): step 2/2. The protein is Glutamate-1-semialdehyde 2,1-aminomutase of Trichlorobacter lovleyi (strain ATCC BAA-1151 / DSM 17278 / SZ) (Geobacter lovleyi).